A 123-amino-acid chain; its full sequence is MIQEQTMLNVADNSGARRVMCIKVLGGSHRRYAHVGDIIKVTIKEAIPRGKVKKGDVLKAVVVRTRKGVRRPDGSVIRFDGNACVLLNNTSEQVIGTRIFGPVTRELRNEKFMKIISLAPEVL.

This sequence belongs to the universal ribosomal protein uL14 family. As to quaternary structure, part of the 50S ribosomal subunit. Forms a cluster with proteins L3 and L19. In the 70S ribosome, L14 and L19 interact and together make contacts with the 16S rRNA in bridges B5 and B8.

Its function is as follows. Binds to 23S rRNA. Forms part of two intersubunit bridges in the 70S ribosome. The chain is Large ribosomal subunit protein uL14 from Photorhabdus laumondii subsp. laumondii (strain DSM 15139 / CIP 105565 / TT01) (Photorhabdus luminescens subsp. laumondii).